Consider the following 152-residue polypeptide: Ribonuclease pancreatic gamma-type (152 aa).

The first 25 residues, 1–25, serve as a signal peptide directing secretion; it reads MGLEKSLFLFSLLVLVLGWVQPSLG. Lys-35 and Arg-38 together coordinate substrate. His-40 acts as the Proton acceptor in catalysis. 4 disulfide bridges follow: Cys-54-Cys-112, Cys-68-Cys-123, Cys-86-Cys-138, and Cys-93-Cys-100. Substrate is bound by residues 69–73, Lys-94, and Arg-113; that span reads KSMNT. His-147 functions as the Proton donor in the catalytic mechanism.

Belongs to the pancreatic ribonuclease family. In terms of assembly, monomer.

The protein resides in the secreted. It catalyses the reaction an [RNA] containing cytidine + H2O = an [RNA]-3'-cytidine-3'-phosphate + a 5'-hydroxy-ribonucleotide-3'-[RNA].. The enzyme catalyses an [RNA] containing uridine + H2O = an [RNA]-3'-uridine-3'-phosphate + a 5'-hydroxy-ribonucleotide-3'-[RNA].. Its function is as follows. Endonuclease that catalyzes the cleavage of RNA on the 3' side of pyrimidine nucleotides. Acts on single-stranded and double-stranded RNA. The polypeptide is Ribonuclease pancreatic gamma-type (Rattus norvegicus (Rat)).